Consider the following 462-residue polypeptide: Zinc finger CCCH domain-containing protein 8 (462 aa).

6 consecutive C3H1-type zinc fingers follow at residues 105–133, 156–184, 209–237, 288–316, 367–395, and 422–450; these read RPGEKDCAFYMMTRTCKFGGSCKFDHPQW, QEGEPDCPFFMKTGKCKFGSKCKFNHPKE, RPSEPLCSFYAKTGKCKFRAMCKFNHPKD, RPGEVDCPFYMKMGSCKFGSTCRFNHPDR, RPGATVCDFYMKTGFCKFADRCKFHHPID, and REDAVVCAFYMKTGVCKFGMQCKFDHPPP.

This is Zinc finger CCCH domain-containing protein 8 from Oryza sativa subsp. japonica (Rice).